The chain runs to 196 residues: Putative adenylate kinase (196 aa).

Residues Gly10, Gly12, Lys13, Thr14, and Ser15 each contribute to the ATP site. Positions 30–53 (YLNDLIKEEHLYSEVDEERDSVIA) are NMP. The segment at 118–128 (KRGYSEEKINE) is LID. Residue Arg119 coordinates ATP.

Belongs to the adenylate kinase family. AK6 subfamily. In terms of assembly, interacts with uS11. Not a structural component of 40S pre-ribosomes, but transiently interacts with them by binding to uS11.

The enzyme catalyses AMP + ATP = 2 ADP. It carries out the reaction ATP + H2O = ADP + phosphate + H(+). In terms of biological role, broad-specificity nucleoside monophosphate (NMP) kinase that catalyzes the reversible transfer of the terminal phosphate group between nucleoside triphosphates and monophosphates. Also has ATPase activity. Involved in the late maturation steps of the 30S ribosomal particles, specifically 16S rRNA maturation. While NMP activity is not required for ribosome maturation, ATPase activity is. Associates transiently with small ribosomal subunit protein uS11. ATP hydrolysis breaks the interaction with uS11. May temporarily remove uS11 from the ribosome to enable a conformational change of the ribosomal RNA that is needed for the final maturation step of the small ribosomal subunit. The polypeptide is Putative adenylate kinase (Methanosarcina mazei (strain ATCC BAA-159 / DSM 3647 / Goe1 / Go1 / JCM 11833 / OCM 88) (Methanosarcina frisia)).